The primary structure comprises 382 residues: Queuine tRNA-ribosyltransferase (382 aa).

Asp96 serves as the catalytic Proton acceptor. Residues 96-100 (DSGGF), Asp151, Gln194, and Gly221 contribute to the substrate site. The segment at 252-258 (GVGAPDS) is RNA binding. Asp271 serves as the catalytic Nucleophile. An RNA binding; important for wobble base 34 recognition region spans residues 276-280 (TRIAR). Positions 309, 311, 314, and 340 each coordinate Zn(2+).

This sequence belongs to the queuine tRNA-ribosyltransferase family. As to quaternary structure, homodimer. Within each dimer, one monomer is responsible for RNA recognition and catalysis, while the other monomer binds to the replacement base PreQ1. Requires Zn(2+) as cofactor.

It carries out the reaction 7-aminomethyl-7-carbaguanine + guanosine(34) in tRNA = 7-aminomethyl-7-carbaguanosine(34) in tRNA + guanine. It participates in tRNA modification; tRNA-queuosine biosynthesis. Functionally, catalyzes the base-exchange of a guanine (G) residue with the queuine precursor 7-aminomethyl-7-deazaguanine (PreQ1) at position 34 (anticodon wobble position) in tRNAs with GU(N) anticodons (tRNA-Asp, -Asn, -His and -Tyr). Catalysis occurs through a double-displacement mechanism. The nucleophile active site attacks the C1' of nucleotide 34 to detach the guanine base from the RNA, forming a covalent enzyme-RNA intermediate. The proton acceptor active site deprotonates the incoming PreQ1, allowing a nucleophilic attack on the C1' of the ribose to form the product. After dissociation, two additional enzymatic reactions on the tRNA convert PreQ1 to queuine (Q), resulting in the hypermodified nucleoside queuosine (7-(((4,5-cis-dihydroxy-2-cyclopenten-1-yl)amino)methyl)-7-deazaguanosine). The chain is Queuine tRNA-ribosyltransferase from Lactococcus lactis subsp. cremoris (strain SK11).